A 449-amino-acid chain; its full sequence is Capsid protein (449 aa).

The tract at residues 1 to 43 is DNA-binding; it reads MERRARRPRGRFYAFRRGRWNHLKRLRRRYKFRHRRRQRYRRR. The segment at 6–47 is nuclear localization signals; it reads RRPRGRFYAFRRGRWNHLKRLRRRYKFRHRRRQRYRRRAFRK.

Belongs to the gyrovirus capsid protein family. Homomultimer (Potential). Interacts with Rep; this interaction relocates Rep into the nucleus.

Its subcellular location is the host nucleus. It localises to the virion. Self-assembles to form the virion icosahedral capsid with a T=1 symmetry. This very small capsid (25 nm in diameter) allows the virus to be very stable in the environment and resistant to some disinfectants, including detergents. Essential for the initial attachment to host receptors. After attachment, the virus is endocytosed and traffics to the nucleus. The capsid protein binds and transports the viral genome and Rep across the nuclear envelope. This is Capsid protein (VP1) from Chicken anemia virus (isolate Japan 82-2) (CAV).